The sequence spans 491 residues: 2,3-bisphosphoglycerate-independent phosphoglycerate mutase (491 aa).

2 residues coordinate Mn(2+): Asp11 and Ser61. Ser61 (phosphoserine intermediate) is an active-site residue. Substrate-binding positions include His118, 147–148, Arg177, Arg183, 248–251, and Lys320; these read RD and RSDR. The Mn(2+) site is built by Asp386, His390, Asp427, His428, and His445.

This sequence belongs to the BPG-independent phosphoglycerate mutase family. Monomer. It depends on Mn(2+) as a cofactor.

The catalysed reaction is (2R)-2-phosphoglycerate = (2R)-3-phosphoglycerate. The protein operates within carbohydrate degradation; glycolysis; pyruvate from D-glyceraldehyde 3-phosphate: step 3/5. Functionally, catalyzes the interconversion of 2-phosphoglycerate and 3-phosphoglycerate. The protein is 2,3-bisphosphoglycerate-independent phosphoglycerate mutase of Aliarcobacter butzleri (strain RM4018) (Arcobacter butzleri).